A 640-amino-acid chain; its full sequence is 1-deoxy-D-xylulose-5-phosphate synthase (640 aa).

Thiamine diphosphate-binding positions include histidine 79 and 120-122 (AHA). Residue aspartate 151 participates in Mg(2+) binding. Thiamine diphosphate-binding positions include 152–153 (GS), asparagine 180, tyrosine 287, and glutamate 369. Mg(2+) is bound at residue asparagine 180.

The protein belongs to the transketolase family. DXPS subfamily. Homodimer. The cofactor is Mg(2+). Thiamine diphosphate serves as cofactor.

It carries out the reaction D-glyceraldehyde 3-phosphate + pyruvate + H(+) = 1-deoxy-D-xylulose 5-phosphate + CO2. It functions in the pathway metabolic intermediate biosynthesis; 1-deoxy-D-xylulose 5-phosphate biosynthesis; 1-deoxy-D-xylulose 5-phosphate from D-glyceraldehyde 3-phosphate and pyruvate: step 1/1. Catalyzes the acyloin condensation reaction between C atoms 2 and 3 of pyruvate and glyceraldehyde 3-phosphate to yield 1-deoxy-D-xylulose-5-phosphate (DXP). This chain is 1-deoxy-D-xylulose-5-phosphate synthase, found in Hyphomonas neptunium (strain ATCC 15444).